Here is a 480-residue protein sequence, read N- to C-terminus: UDP-glucose 6-dehydrogenase 2 (480 aa).

Residues 8–13, aspartate 33, arginine 38, 86–90, 127–128, and glutamate 161 contribute to the NAD(+) site; these read GAGYVG, VNTPT, and ST. Substrate is bound by residues 157-161, 216-223, and 256-269; these read EFLAE, KLAANAFL, and RIGP…VGFG. Residue cysteine 272 is the Nucleophile of the active site. 272–275 serves as a coordination point for NAD(+); that stretch reads CFQK. 334 to 335 lines the substrate pocket; it reads FK. Position 342 (arginine 342) interacts with NAD(+). Arginine 447 contacts substrate.

Belongs to the UDP-glucose/GDP-mannose dehydrogenase family. As to expression, preferentially expressed in roots.

It catalyses the reaction UDP-alpha-D-glucose + 2 NAD(+) + H2O = UDP-alpha-D-glucuronate + 2 NADH + 3 H(+). It participates in nucleotide-sugar biosynthesis; UDP-alpha-D-glucuronate biosynthesis; UDP-alpha-D-glucuronate from UDP-alpha-D-glucose: step 1/1. Its activity is regulated as follows. Inhibited by UDP-xylose. Involved in the biosynthesis of UDP-glucuronic acid (UDP-GlcA), providing nucleotide sugars for cell-wall polymers. Required for the formation of cell wall ingrowths on the outer cell walls of nematode-induced syncytia. The protein is UDP-glucose 6-dehydrogenase 2 (UGD2) of Arabidopsis thaliana (Mouse-ear cress).